Consider the following 422-residue polypeptide: Growth arrest-specific protein 7 (422 aa).

The tract at residues Met1 to Asn117 is disordered. The 34-residue stretch at Val22–Ser55 folds into the WW domain. Residues Val41–Arg52 show a composition bias toward polar residues. The segment covering Pro53–Pro65 has biased composition (low complexity). Phosphoserine occurs at positions 62 and 108. Residues Arg95–Asn117 are compositionally biased toward polar residues. Residues Thr141–Asp402 form the F-BAR domain. A coiled-coil region spans residues Glu254–Leu329.

It localises to the cytoplasm. In terms of biological role, may play a role in promoting maturation and morphological differentiation of cerebellar neurons. The protein is Growth arrest-specific protein 7 (Gas7) of Rattus norvegicus (Rat).